The chain runs to 206 residues: MKEQLKGLLDQAQINLSEAQIEQQLALVGLLDKWNKAYNLTSVRNPKDMLTRHIMDSLAVRQYLHGQRFIDVGTGPGLPGLPLAIAEPDNEFVLLDSLGKRIRFIRQVCHELKLTNVTAVQARVEDYQDEKQFDGVISRAFASLNDMLSWCEHLPAENGRFYALKGLYPQDELEQLPEQYKIESIEQINVPGIDASRHIVIISKRS.

S-adenosyl-L-methionine is bound by residues Gly73, Leu78, 124-125 (VE), and Arg139.

This sequence belongs to the methyltransferase superfamily. RNA methyltransferase RsmG family.

The protein localises to the cytoplasm. It carries out the reaction guanosine(527) in 16S rRNA + S-adenosyl-L-methionine = N(7)-methylguanosine(527) in 16S rRNA + S-adenosyl-L-homocysteine. Functionally, specifically methylates the N7 position of guanine in position 527 of 16S rRNA. This is Ribosomal RNA small subunit methyltransferase G from Idiomarina loihiensis (strain ATCC BAA-735 / DSM 15497 / L2-TR).